Consider the following 201-residue polypeptide: MQISPLLENLMEALRALPGVGPKSAQRMAYHLLQRNRSGGINLSKALNEAMTHIGHCRSCRTFTEEDECNICKNPRRQMSGQLCVVEMPEDIQAIEQTGQFSGRYFVLMGHLSPLDGIGPREIGLDLLQSRLENESFHEVILATNPTIEGDATANYIAEMCRIHNVKVTRIAHGIPVGGSLEMVDGTTLSHSFAGRRDVSL.

A C4-type zinc finger spans residues 57–72 (CRSCRTFTEEDECNIC). One can recognise a Toprim domain in the interval 81–176 (GQLCVVEMPE…KVTRIAHGIP (96 aa)).

Belongs to the RecR family.

Functionally, may play a role in DNA repair. It seems to be involved in an RecBC-independent recombinational process of DNA repair. It may act with RecF and RecO. This is Recombination protein RecR from Actinobacillus pleuropneumoniae serotype 5b (strain L20).